A 247-amino-acid chain; its full sequence is Adenosylcobinamide-GDP ribazoletransferase (247 aa).

The next 5 membrane-spanning stretches (helical) occupy residues 34–54 (IITFPLIGLLLGAISGLVFMV), 57–77 (AWCGAPLAALFSVLVLALMTG), 113–133 (GGLALIFVVLAKILVLSELAL), 138–158 (ILASLAAACAVSRGTAALLMY), and 194–214 (VLLLGMHGVAAMVVTMVAIFI).

This sequence belongs to the CobS family. The cofactor is Mg(2+).

It is found in the cell inner membrane. The enzyme catalyses alpha-ribazole + adenosylcob(III)inamide-GDP = adenosylcob(III)alamin + GMP + H(+). The catalysed reaction is alpha-ribazole 5'-phosphate + adenosylcob(III)inamide-GDP = adenosylcob(III)alamin 5'-phosphate + GMP + H(+). It participates in cofactor biosynthesis; adenosylcobalamin biosynthesis; adenosylcobalamin from cob(II)yrinate a,c-diamide: step 7/7. Joins adenosylcobinamide-GDP and alpha-ribazole to generate adenosylcobalamin (Ado-cobalamin). Also synthesizes adenosylcobalamin 5'-phosphate from adenosylcobinamide-GDP and alpha-ribazole 5'-phosphate. This is Adenosylcobinamide-GDP ribazoletransferase from Shigella flexneri.